A 382-amino-acid polypeptide reads, in one-letter code: Pregnancy-associated glycoprotein 1 (382 aa).

A signal peptide spans 1-15; sequence MKWLVLLGLVAFSEC. A propeptide spans 16–53 (activation peptide); it reads IVKIPLRRVKTMRNTLSGKKMLNSFLKEHAYRLSQISF. 2 N-linked (GlcNAc...) asparagine glycosylation sites follow: asparagine 57 and asparagine 74. Residues 71–379 enclose the Peptidase A1 domain; that stretch reads YVGNITIGTP…DRGNDRIGLA (309 aa). Cysteine 102 and cysteine 110 are oxidised to a cystine. A glycan (N-linked (GlcNAc...) asparagine) is linked at asparagine 128. Disulfide bonds link cysteine 263/cysteine 267 and cysteine 305/cysteine 339.

It belongs to the peptidase A1 family. In terms of tissue distribution, trophoblast and placental tissue. Produced specifically in the invasive binucleate cells of the placenta.

It is found in the secreted. Its subcellular location is the extracellular space. In terms of biological role, has no proteolytic activity. This Ovis aries (Sheep) protein is Pregnancy-associated glycoprotein 1.